A 269-amino-acid chain; its full sequence is Regulating synaptic membrane exocytosis protein 4 (269 aa).

The 119-residue stretch at 115-233 (PMGDVEIGLQ…DLTTLAVGWY (119 aa)) folds into the C2 domain. Residues Ser254 and Ser257 each carry the phosphoserine modification.

Binds PPFIA3. Does not bind RAB3.

Its subcellular location is the synapse. Its function is as follows. Regulates synaptic membrane exocytosis. This is Regulating synaptic membrane exocytosis protein 4 (RIMS4) from Homo sapiens (Human).